We begin with the raw amino-acid sequence, 245 residues long: 1-(5-phosphoribosyl)-5-[(5-phosphoribosylamino)methylideneamino] imidazole-4-carboxamide isomerase (245 aa).

Residue D8 is the Proton acceptor of the active site. D130 functions as the Proton donor in the catalytic mechanism.

The protein belongs to the HisA/HisF family.

The protein localises to the cytoplasm. The enzyme catalyses 1-(5-phospho-beta-D-ribosyl)-5-[(5-phospho-beta-D-ribosylamino)methylideneamino]imidazole-4-carboxamide = 5-[(5-phospho-1-deoxy-D-ribulos-1-ylimino)methylamino]-1-(5-phospho-beta-D-ribosyl)imidazole-4-carboxamide. It participates in amino-acid biosynthesis; L-histidine biosynthesis; L-histidine from 5-phospho-alpha-D-ribose 1-diphosphate: step 4/9. The protein is 1-(5-phosphoribosyl)-5-[(5-phosphoribosylamino)methylideneamino] imidazole-4-carboxamide isomerase of Pseudomonas fluorescens (strain Pf0-1).